The following is a 148-amino-acid chain: Small ribosomal subunit protein uS13 (148 aa).

The tract at residues arginine 128–lysine 148 is disordered.

This sequence belongs to the universal ribosomal protein uS13 family. In terms of assembly, part of the 30S ribosomal subunit. Forms a loose heterodimer with protein S19. Forms two bridges to the 50S subunit in the 70S ribosome.

Located at the top of the head of the 30S subunit, it contacts several helices of the 16S rRNA. In the 70S ribosome it contacts the 23S rRNA (bridge B1a) and protein L5 of the 50S subunit (bridge B1b), connecting the 2 subunits; these bridges are implicated in subunit movement. The protein is Small ribosomal subunit protein uS13 of Methanococcoides burtonii (strain DSM 6242 / NBRC 107633 / OCM 468 / ACE-M).